The chain runs to 1050 residues: Nuclear pore complex-interacting protein family member B3 (1050 aa).

Residues 63–87 (VIIAFPTSYKVVITLWIVYLWVSLL) form a helical membrane-spanning segment. 3 disordered regions span residues 241–262 (NRMGHQPPPPTQQHSITDNSLS), 290–574 (LTPL…NIKT), and 785–1050 (ERLR…RRLS). A compositionally biased stretch (polar residues) spans 252 to 262 (QQHSITDNSLS). The span at 349-359 (PLPPSALPSAP) shows a compositional bias: pro residues. Composition is skewed to basic and acidic residues over residues 406–416 (DNIKTPAERLR), 448–458 (DNIKTPAERLR), 490–500 (DNIKTPAERLR), 528–538 (DNIKTPAERLR), 820–830 (DNIKTPAERLR), 862–872 (DNIKTPAERLR), and 904–914 (DNIKTPAERLR).

The protein belongs to the NPIP family.

It localises to the membrane. This is Nuclear pore complex-interacting protein family member B3 (NPIPB3) from Homo sapiens (Human).